Here is a 74-residue protein sequence, read N- to C-terminus: Toxin BmKaTx17 (74 aa).

The first 8 residues, 1 to 8 (LLMTGVES), serve as a signal peptide directing secretion. One can recognise an LCN-type CS-alpha/beta domain in the interval 10-72 (RDAYIAKNYN…KPIRIPGKCH (63 aa)). 4 disulfides stabilise this stretch: Cys-20–Cys-71, Cys-24–Cys-44, Cys-30–Cys-54, and Cys-34–Cys-56. Positions 73-74 (RR) are cleaved as a propeptide — removed by a carboxypeptidase.

This sequence belongs to the long (4 C-C) scorpion toxin superfamily. Sodium channel inhibitor family. Alpha subfamily. As to expression, expressed by the venom gland.

It is found in the secreted. Functionally, alpha toxins bind voltage-independently at site-3 of sodium channels (Nav) and inhibit the inactivation of the activated channels, thereby blocking neuronal transmission. The sequence is that of Toxin BmKaTx17 from Olivierus martensii (Manchurian scorpion).